The following is a 569-amino-acid chain: Sialic acid-binding Ig-like lectin 5 (569 aa).

The first 16 residues, 1-16 (MRWAWLLPLLWAGCLA), serve as a signal peptide directing secretion. Residues 17-439 (TDGYSLSVTG…KSETSRGTVL (423 aa)) are Extracellular-facing. Residues 18–116 (DGYSLSVTGS…DTGTYFFRLD (99 aa)) form the Ig-like V-type domain. Disulfide bonds link C35-C163, C40-C96, C157-C206, and C265-C308. N95 is a glycosylation site (N-linked (GlcNAc...) asparagine). The N-acetylneuraminate site is built by R114, K120, and S122. Ig-like C2-type domains follow at residues 139-224 (PNIQ…QQLS) and 229-324 (PQKM…VSLS). N-linked (GlcNAc...) asparagine glycosylation is found at N151, N200, and N203. N-linked (GlcNAc...) asparagine glycosylation is found at N369, N372, and N387. Residues 440–460 (GAIWGAGLMALLAVCLCLIFF) form a helical membrane-spanning segment. Topologically, residues 461-569 (TVKVLRKKSA…VYTEIKIHKC (109 aa)) are cytoplasmic. Residues 508 to 556 (HLNEPGSQTQKEQPPLATVPDTQKDEPELHYASLSFQGPMPPKPQNTEA) form a disordered region. The ITIM motif motif lies at 536–541 (LHYASL). The SLAM-like motif motif lies at 559–564 (SVYTEI).

It belongs to the immunoglobulin superfamily. SIGLEC (sialic acid binding Ig-like lectin) family. Predominantly expressed by immature monocytic/myeloid lineage cells in bone marrow. Also found at lower levels in mature neutrophils and monocytes.

The protein resides in the membrane. Putative adhesion molecule that mediates sialic-acid dependent binding to cells. Preferentially binds to alpha-2,3-linked sialic acid. The sialic acid recognition site may be masked by cis interactions with sialic acids on the same cell surface. This Mus musculus (Mouse) protein is Sialic acid-binding Ig-like lectin 5 (Siglec5).